The primary structure comprises 125 residues: Snaclec botrocetin subunit beta (125 aa).

3 disulfide bridges follow: Cys-2-Cys-13, Cys-30-Cys-121, and Cys-98-Cys-113. The 114-residue stretch at 9-122 folds into the C-type lectin domain; that stretch reads YEGHCYRFFK…CTRFKNFVCE (114 aa).

The protein belongs to the snaclec family. In terms of assembly, heterodimer of subunits alpha and beta; disulfide-linked. Botrocetin and vWF form a soluble complex. As to expression, expressed by the venom gland.

It is found in the secreted. In terms of biological role, snaclec that binds to von Willebrand factor (VWF) and induces its interaction with GPIbalpha (GP1BA) (via the vWF A1 domain), resulting in platelet aggregation. This is Snaclec botrocetin subunit beta from Bothrops jararaca (Jararaca).